The primary structure comprises 86 residues: Putative membrane protein insertion efficiency factor (86 aa).

Positions 67–86 (LHEGGDDPVPPVKNNDNREH) are disordered.

It belongs to the UPF0161 family.

It is found in the cell inner membrane. In terms of biological role, could be involved in insertion of integral membrane proteins into the membrane. This chain is Putative membrane protein insertion efficiency factor, found in Photorhabdus laumondii subsp. laumondii (strain DSM 15139 / CIP 105565 / TT01) (Photorhabdus luminescens subsp. laumondii).